A 238-amino-acid polypeptide reads, in one-letter code: Ribosomal RNA small subunit methyltransferase G (238 aa).

Residues Gly-77, Phe-82, 128-129 (AE), and Arg-147 contribute to the S-adenosyl-L-methionine site. Positions 216–238 (RKERSTPKKYPRKPGTPNKQPLS) are disordered.

The protein belongs to the methyltransferase superfamily. RNA methyltransferase RsmG family.

It is found in the cytoplasm. In terms of biological role, specifically methylates the N7 position of guanine in position 535 of 16S rRNA. The chain is Ribosomal RNA small subunit methyltransferase G from Halalkalibacterium halodurans (strain ATCC BAA-125 / DSM 18197 / FERM 7344 / JCM 9153 / C-125) (Bacillus halodurans).